The chain runs to 304 residues: Acetyl-coenzyme A carboxylase carboxyl transferase subunit beta (304 aa).

The CoA carboxyltransferase N-terminal domain maps to 25-294 (VWTKCDSCGQ…PSVVESKADT (270 aa)). Residues Cys29, Cys32, Cys48, and Cys51 each coordinate Zn(2+). The C4-type zinc-finger motif lies at 29–51 (CDSCGQVLYRAELERNLEVCPKC).

This sequence belongs to the AccD/PCCB family. Acetyl-CoA carboxylase is a heterohexamer composed of biotin carboxyl carrier protein (AccB), biotin carboxylase (AccC) and two subunits each of ACCase subunit alpha (AccA) and ACCase subunit beta (AccD). Zn(2+) is required as a cofactor.

The protein resides in the cytoplasm. The catalysed reaction is N(6)-carboxybiotinyl-L-lysyl-[protein] + acetyl-CoA = N(6)-biotinyl-L-lysyl-[protein] + malonyl-CoA. It functions in the pathway lipid metabolism; malonyl-CoA biosynthesis; malonyl-CoA from acetyl-CoA: step 1/1. Component of the acetyl coenzyme A carboxylase (ACC) complex. Biotin carboxylase (BC) catalyzes the carboxylation of biotin on its carrier protein (BCCP) and then the CO(2) group is transferred by the transcarboxylase to acetyl-CoA to form malonyl-CoA. This Yersinia pestis (strain Pestoides F) protein is Acetyl-coenzyme A carboxylase carboxyl transferase subunit beta.